The sequence spans 140 residues: Small ribosomal subunit protein uS12m (140 aa).

The protein belongs to the universal ribosomal protein uS12 family.

It is found in the mitochondrion. The chain is Small ribosomal subunit protein uS12m (mrps12) from Dictyostelium citrinum (Slime mold).